The sequence spans 157 residues: UPF0262 protein amb3341 (157 aa).

Belongs to the UPF0262 family.

This is UPF0262 protein amb3341 from Paramagnetospirillum magneticum (strain ATCC 700264 / AMB-1) (Magnetospirillum magneticum).